Consider the following 217-residue polypeptide: KS1 protein (217 aa).

A signal peptide spans 1-16; that stretch reads MKLIIVLVMMLVCVYS. Positions 24–47 are enriched in basic and acidic residues; that stretch reads PKNHEVPAKKQFAETKVEKKKRSD. Disordered regions lie at residues 24-58 and 72-205; these read PKNH…DDDD and EDDD…LKIK. A run of 2 repeats spans residues 32 to 81 and 98 to 147. A 2 X 50 AA approximate repeats region spans residues 32–147; that stretch reads KKQFAETKVE…EEDDDCYDED (116 aa). Composition is skewed to acidic residues over residues 48-58 and 72-94; these read DGDEEICDDDD and EDDD…DDCQ. The span at 98 to 110 shows a compositional bias: basic residues; that stretch reads KKKKRETKPKLKK. Over residues 114-145 the composition is skewed to acidic residues; the sequence is DEEEEECEEDDEDCEVEVDIEECDEEDDDCYD. Over residues 149 to 188 the composition is skewed to basic residues; that stretch reads KKKKENKLKKESKKKNSKKTVPKNAKKSSKRSTSTKKTSQ.

In terms of tissue distribution, expressed in tentacle-specific epithelial cells (battery cells) as well as in a small fraction of ectodermal epithelial cells in the gastric region subjacent to the tentacles (the tentacle formation region). The later cells are committed to become battery cells.

Responds to early signals of head formation in hydra. The polypeptide is KS1 protein (KS1) (Hydra vulgaris (Hydra)).